The sequence spans 93 residues: Small ribosomal subunit protein uS19 (93 aa).

It belongs to the universal ribosomal protein uS19 family.

Protein S19 forms a complex with S13 that binds strongly to the 16S ribosomal RNA. The polypeptide is Small ribosomal subunit protein uS19 (Anaplasma marginale (strain Florida)).